The sequence spans 93 residues: Small ribosomal subunit protein uS19 (93 aa).

The protein belongs to the universal ribosomal protein uS19 family.

Its function is as follows. Protein S19 forms a complex with S13 that binds strongly to the 16S ribosomal RNA. The sequence is that of Small ribosomal subunit protein uS19 from Campylobacter lari (strain RM2100 / D67 / ATCC BAA-1060).